We begin with the raw amino-acid sequence, 275 residues long: HUWE1-associated protein modifying stress responses 1 (275 aa).

Positions 32–44 are enriched in acidic residues; it reads AEQDEQLPPELQE. The disordered stretch occupies residues 32–51; sequence AEQDEQLPPELQEEAAAAAQ. An HUWE1-binding and HAPSTR1 oligomerization (HBO) domain region spans residues 80–152; that stretch reads QQPGLSLWVP…LISFLCGKVP (73 aa). Disordered stretches follow at residues 155 to 181, 204 to 227, and 250 to 275; these read RNSR…SSVE, SVRS…RRRN, and GTRK…NRMI. S167 bears the Phosphoserine mark. The segment covering 172 to 181 has biased composition (low complexity); it reads TSTETSSSVE. The segment covering 204–216 has biased composition (polar residues); sequence SVRSSTPGSPTHV. S212 bears the Phosphoserine mark.

This sequence belongs to the HAPSTR1 family. Homooligomer. Heterooligomer with HAPSTR2; the interaction is direct and stabilizes HAPSTR1. Interacts with HUWE1. Post-translationally, ubiquitinated by HUWE1. Promotes HAPSTR1 degradation through polyubiquitination.

The protein localises to the nucleus. It is found in the cytoplasm. Its function is as follows. Acts as a central player within a network of stress response pathways promoting cellular adaptability. The E3 ligase HUWE1 assists HAPSTR1 in controlling stress signaling and in turn, HUWE1 feeds back to promote the degradation of HAPSTR1. HAPSTR1 represents a central coordination mechanism for stress response programs. Functions as a negative regulator of TP53/P53 in the cellular response to telomere erosion and probably also DNA damage. May attenuate p53/TP53 activation through the E3 ubiquitin ligase HUWE1. The chain is HUWE1-associated protein modifying stress responses 1 from Homo sapiens (Human).